The following is a 292-amino-acid chain: Homoserine kinase (292 aa).

84 to 94 (PLSRGLGSSSA) is an ATP binding site.

It belongs to the GHMP kinase family. Homoserine kinase subfamily.

The protein localises to the cytoplasm. It catalyses the reaction L-homoserine + ATP = O-phospho-L-homoserine + ADP + H(+). It participates in amino-acid biosynthesis; L-threonine biosynthesis; L-threonine from L-aspartate: step 4/5. Functionally, catalyzes the ATP-dependent phosphorylation of L-homoserine to L-homoserine phosphate. The sequence is that of Homoserine kinase from Campylobacter jejuni subsp. jejuni serotype O:2 (strain ATCC 700819 / NCTC 11168).